Here is a 101-residue protein sequence, read N- to C-terminus: Small ribosomal subunit protein uS14 (101 aa).

It belongs to the universal ribosomal protein uS14 family. As to quaternary structure, part of the 30S ribosomal subunit. Contacts proteins S3 and S10.

Binds 16S rRNA, required for the assembly of 30S particles and may also be responsible for determining the conformation of the 16S rRNA at the A site. The chain is Small ribosomal subunit protein uS14 from Vibrio vulnificus (strain CMCP6).